The sequence spans 742 residues: Synaptic vesicle glycoprotein 2A (742 aa).

The segment at 1–57 is interaction with SYT1; that stretch reads MEEGFRDRAAFIRGAKDIAKEVKKHAAKKVVKGLDRVQDEYSRRSYSRFEEEDDDDD. At 1–169 the chain is on the cytoplasmic side; that stretch reads MEEGFRDRAA…GHGRFQWTLY (169 aa). Basic and acidic residues predominate over residues 33–49; sequence GLDRVQDEYSRRSYSRF. Residues 33–144 are disordered; it reads GLDRVQDEYS…GRGEAQRRKE (112 aa). Phosphoserine occurs at positions 80 and 81. Threonine 84 carries the phosphothreonine modification. Gly residues predominate over residues 122–137; the sequence is VRGGLSDGEGPPGGRG. Serine 127 is modified (phosphoserine). The chain crosses the membrane as a helical span at residues 170-190; the sequence is FVLGLALMADGVEVFVVGFVL. Residues 191 to 205 are Extracellular-facing; sequence PSAEKDMCLSDSNKG. A helical transmembrane segment spans residues 206 to 226; that stretch reads MLGLIVYLGMMVGAFLWGGLA. Topologically, residues 227–233 are cytoplasmic; that stretch reads DRLGRRQ. Residues 234 to 254 traverse the membrane as a helical segment; that stretch reads CLLISLSVNSVFAFFSSFVQG. Topologically, residues 255–262 are extracellular; sequence YGTFLFCR. Residues 263-283 form a helical membrane-spanning segment; sequence LLSGVGIGGSIPIVFSYFSEF. The Cytoplasmic segment spans residues 284 to 294; sequence LAQEKRGEHLS. The helical transmembrane segment at 295–315 threads the bilayer; that stretch reads WLCMFWMIGGVYAAAMAWAII. Topologically, residues 316–334 are extracellular; it reads PHYGWSFQMGSAYQFHSWR. The helical transmembrane segment at 335 to 355 threads the bilayer; that stretch reads VFVLVCAFPSVFAIGALTTQP. The Cytoplasmic portion of the chain corresponds to 356-447; it reads ESPRFFLENG…CFGPEYRRIT (92 aa). Phosphoserine is present on serine 393. A helical membrane pass occupies residues 448–468; it reads LMMMGVWFTMSFSYYGLTVWF. At 469-598 the chain is on the extracellular side; sequence PDMIRHLQAV…GTGEGAYMVY (130 aa). Tyrosine 480 is modified (phosphotyrosine). 3 N-linked (GlcNAc...) asparagine glycosylation sites follow: asparagine 498, asparagine 548, and asparagine 573. Residues 599–619 traverse the membrane as a helical segment; it reads FVSFLGTLAVLPGNIVSALLM. The Cytoplasmic segment spans residues 620-626; the sequence is DKIGRLR. The helical transmembrane segment at 627–647 threads the bilayer; the sequence is MLAGSSVMSCVSCFFLSFGNS. Residues 648-651 lie on the Extracellular side of the membrane; it reads ESAM. Residues 652 to 672 traverse the membrane as a helical segment; the sequence is IALLCLFGGVSIASWNALDVL. Residues 673-685 are Cytoplasmic-facing; it reads TVELYPSDKRTTA. The helical transmembrane segment at 686-708 threads the bilayer; that stretch reads FGFLNALCKLAAVLGISIFTSFV. Over 709-712 the chain is Extracellular; the sequence is GITK. A helical transmembrane segment spans residues 713 to 731; sequence AAPILFASAALALGSSLAL. The Cytoplasmic segment spans residues 732-742; it reads KLPETRGQVLQ.

It belongs to the major facilitator superfamily. In terms of assembly, interacts with SYT1/synaptotagmin-1 in a calcium-dependent manner. Binds the adapter protein complex AP-2. (Microbial infection) Interacts with C.botulinum neurotoxin type A2 (BoNT/A, botA). Interaction is improved by glycosylation of SV2. Phosphorylation by CK1 of the N-terminal cytoplasmic domain regulates interaction with SYT1. Post-translationally, N-glycosylated.

It is found in the presynapse. It localises to the cytoplasmic vesicle. The protein localises to the secretory vesicle. The protein resides in the synaptic vesicle membrane. Functionally, plays a role in the control of regulated secretion in neural and endocrine cells, enhancing selectively low-frequency neurotransmission. Positively regulates vesicle fusion by maintaining the readily releasable pool of secretory vesicles. (Microbial infection) Receptor for the C.botulinum neurotoxin type A2 (BoNT/A, botA); glycosylation is not essential but enhances the interaction. Probably also serves as a receptor for the closely related C.botulinum neurotoxin type A1. This is Synaptic vesicle glycoprotein 2A (SV2A) from Homo sapiens (Human).